We begin with the raw amino-acid sequence, 391 residues long: 1-deoxy-D-xylulose 5-phosphate reductoisomerase (391 aa).

The NADPH site is built by Thr17, Gly18, Ser19, Ile20, Asn47, and Asn130. 1-deoxy-D-xylulose 5-phosphate is bound at residue Lys131. Glu132 provides a ligand contact to NADPH. Asp156 provides a ligand contact to Mn(2+). The 1-deoxy-D-xylulose 5-phosphate site is built by Ser157, Glu158, Ser182, and His205. Residue Glu158 coordinates Mn(2+). Gly211 serves as a coordination point for NADPH. Residues Ser218, Asn223, Lys224, and Glu227 each coordinate 1-deoxy-D-xylulose 5-phosphate. Glu227 contacts Mn(2+).

Belongs to the DXR family. Mg(2+) serves as cofactor. It depends on Mn(2+) as a cofactor.

The catalysed reaction is 2-C-methyl-D-erythritol 4-phosphate + NADP(+) = 1-deoxy-D-xylulose 5-phosphate + NADPH + H(+). Its pathway is isoprenoid biosynthesis; isopentenyl diphosphate biosynthesis via DXP pathway; isopentenyl diphosphate from 1-deoxy-D-xylulose 5-phosphate: step 1/6. Functionally, catalyzes the NADPH-dependent rearrangement and reduction of 1-deoxy-D-xylulose-5-phosphate (DXP) to 2-C-methyl-D-erythritol 4-phosphate (MEP). The sequence is that of 1-deoxy-D-xylulose 5-phosphate reductoisomerase from Rhizobium meliloti (strain 1021) (Ensifer meliloti).